Consider the following 500-residue polypeptide: Probable cytosol aminopeptidase (500 aa).

Residues lysine 262 and aspartate 267 each coordinate Mn(2+). Residue lysine 274 is part of the active site. The Mn(2+) site is built by aspartate 285, aspartate 344, and glutamate 346. The active site involves arginine 348.

It belongs to the peptidase M17 family. Requires Mn(2+) as cofactor.

The protein resides in the cytoplasm. The enzyme catalyses Release of an N-terminal amino acid, Xaa-|-Yaa-, in which Xaa is preferably Leu, but may be other amino acids including Pro although not Arg or Lys, and Yaa may be Pro. Amino acid amides and methyl esters are also readily hydrolyzed, but rates on arylamides are exceedingly low.. It catalyses the reaction Release of an N-terminal amino acid, preferentially leucine, but not glutamic or aspartic acids.. Functionally, presumably involved in the processing and regular turnover of intracellular proteins. Catalyzes the removal of unsubstituted N-terminal amino acids from various peptides. In Ehrlichia ruminantium (strain Welgevonden), this protein is Probable cytosol aminopeptidase.